The following is a 235-amino-acid chain: Eukaryotic translation initiation factor 4E-1 (235 aa).

Residues 1-36 form a disordered region; sequence MVVEETIKATSTEDLSNTIANQNPRGRGGDEDEELE. Residues 8 to 24 are compositionally biased toward polar residues; that stretch reads KATSTEDLSNTIANQNP. EIF4G-binding stretches follow at residues 60–63 and 70–106; these read HPLE and FDNP…NNIH. Residues 78–83, K110, and 128–129 each bind mRNA; these read KQATWG and WE. C133 and C171 are oxidised to a cystine. Positions 154–163 are EIF4G-binding; the sequence is YTLLAMIGEQ. MRNA-binding positions include 178 to 183 and 223 to 227; these read RSGQDK and KKFDR.

This sequence belongs to the eukaryotic initiation factor 4E family. In terms of assembly, EIF4F is a multi-subunit complex, the composition of which varies with external and internal environmental conditions. It is composed of at least EIF4A, EIF4E and EIF4G. EIF4E is also known to interact with other partners. In higher plants two isoforms of EIF4F have been identified, named isoform EIF4F and isoform EIF(iso)4F. Isoform EIF4F has subunits p220 and p26, whereas isoform EIF(iso)4F has subunits p82 and p28. As to quaternary structure, (Microbial infection) Interacts with potyvirus viral genome-linked protein (VPg); this interaction is possible in susceptible hosts but impaired in resistant plants. According to the redox status, the Cys-133-Cys-171 disulfide bridge may have a role in regulating protein function by affecting its ability to bind capped mRNA.

The protein resides in the nucleus. Its subcellular location is the cytoplasm. Its function is as follows. Component of the protein complex eIF4F, which is involved in the recognition of the mRNA cap, ATP-dependent unwinding of 5'-terminal secondary structure and recruitment of mRNA to the ribosome. Recognizes and binds the 7-methylguanosine-containing mRNA cap during an early step in the initiation of protein synthesis and facilitates ribosome binding by inducing the unwinding of the mRNAs secondary structures. Key component of recessive resistance to potyviruses. Functionally, (Microbial infection) Susceptibility host factor required for viral infection by recruiting viral RNAs to the host ribosomal complex via an interaction with viral genome-linked protein (VPg). This is Eukaryotic translation initiation factor 4E-1 from Citrullus lanatus (Watermelon).